Consider the following 357-residue polypeptide: SUN domain-containing protein 3 (357 aa).

Residues 1 to 47 lie on the Nuclear side of the membrane; the sequence is MSGKTKARRAAMFFRRCSEDASGSASGNALLSEDENPDANGVTRSWK. A helical membrane pass occupies residues 48 to 64; the sequence is IILSTMLTLTFLLVGLL. Residues 65-357 are Perinuclear space-facing; the sequence is NHQWLKETDV…RVHGTPGKHI (293 aa). Positions 98-146 form a coiled coil; the sequence is RLRMPKEQLELLKKESQNLENNFRQILFLIEQIDVLKALLRDMKDGMDN. The SUN domain occupies 193–354; it reads GASIIEAGTS…YRFRVHGTPG (162 aa).

In terms of assembly, self-associates. Interacts with SYNE1 and SPAG4/SUN4. Proposed to form a spermatogenesis-specific LINC complex with SYNE1 during sperm head formation possibly implicating a SUN domain-based heterotrimer with SPAG4/SUN4 associating with SYNE1.

The protein localises to the membrane. The protein resides in the nucleus envelope. It is found in the nucleus inner membrane. As a probable component of the LINC (LInker of Nucleoskeleton and Cytoskeleton) complex, involved in the connection between the nuclear lamina and the cytoskeleton. The nucleocytoplasmic interactions established by the LINC complex play an important role in the transmission of mechanical forces across the nuclear envelope and in nuclear movement and positioning. May be involved in nuclear remodeling during sperm head formation in spermatogenesis. A probable SUN3:SYNE1 LINC complex may tether spermatid nuclei to posterior cytoskeletal structures such as the manchette. This is SUN domain-containing protein 3 (SUN3) from Homo sapiens (Human).